The chain runs to 103 residues: Histone H4 (103 aa).

Positions 1–14 (MSGRGKGGKGLGKG) are enriched in gly residues. The tract at residues 1 to 20 (MSGRGKGGKGLGKGGAKRHR) is disordered. An N6-(2-hydroxyisobutyryl)lysine; alternate mark is found at K6, K9, K13, K17, K32, and K45. N6-acetyl-N6-methyllysine; alternate is present on K6. 6 positions are modified to N6-butyryllysine; alternate: K6, K9, K13, K17, K32, and K45. K6 bears the N6-glutaryllysine; alternate mark. N6-propionyllysine; alternate is present on K9. K13 carries the N6-acetyl-N6-methyllysine; alternate modification. K13 is subject to N6-glutaryllysine; alternate. K17, K32, and K45 each carry N6-propionyllysine; alternate. A DNA-binding region spans residues 17 to 21 (KRHRK). At K32 the chain carries N6-glutaryllysine; alternate. K32 carries the N6-succinyllysine; alternate modification. An N6-glutaryllysine; alternate mark is found at K60, K78, K80, and K92. K60 bears the N6-(2-hydroxyisobutyryl)lysine mark. Residues K78, K80, and K92 each carry the N6-(2-hydroxyisobutyryl)lysine; alternate modification. 3 positions are modified to N6-butyryllysine; alternate: K78, K80, and K92. N6-propionyllysine; alternate occurs at positions 78, 80, and 92. K78 carries the N6-succinyllysine modification. K92 carries the post-translational modification N6-succinyllysine; alternate.

It belongs to the histone H4 family. As to quaternary structure, the nucleosome is a histone octamer containing two molecules each of H2A, H2B, H3 and H4 assembled in one H3-H4 heterotetramer and two H2A-H2B heterodimers. The octamer wraps approximately 147 bp of DNA. Post-translationally, butyrylation of histones marks active promoters and competes with histone acetylation. In terms of processing, glutarylation at Lys-92 (H4K91glu) destabilizes nucleosomes by promoting dissociation of the H2A-H2B dimers from nucleosomes.

It localises to the nucleus. The protein localises to the chromosome. Functionally, core component of nucleosome. Nucleosomes wrap and compact DNA into chromatin, limiting DNA accessibility to the cellular machineries which require DNA as a template. Histones thereby play a central role in transcription regulation, DNA repair, DNA replication and chromosomal stability. DNA accessibility is regulated via a complex set of post-translational modifications of histones, also called histone code, and nucleosome remodeling. The chain is Histone H4 (H4.1) from Oikopleura dioica (Tunicate).